A 306-amino-acid chain; its full sequence is Esterase tropF (306 aa).

Residues S147, D248, and H276 each act as charge relay system in the active site.

It belongs to the LovG family.

Its pathway is secondary metabolite biosynthesis. Its function is as follows. Esterase; part of the gene cluster that mediates the biosynthesis of the tropolone class of fungal maleic anhydrides. The pathway begins with the synthesis of 3-methylorcinaldehyde by the non-reducing polyketide synthase (PKS) tropA. 3-methylorcinaldehyde is the substrate for the FAD-dependent monooxygenase tropB to yield a dearomatized hydroxycyclohexadione. The 2-oxoglutarate-dependent dioxygenase tropC then performs the oxidative ring expansion to provide the first tropolone metabolite stipitaldehyde. Trop D converts stipitaldehyde into stipitacetal which is in turn converted to stipitalide by the short-chain dehydrogenase/reductase tropE. The next steps involve tropF, tropG, tropH, tropI and tropJ to form successive tropolone maleic anhydrides including stipitaldehydic, stipitatonic and stipitatic acids. In Talaromyces stipitatus (strain ATCC 10500 / CBS 375.48 / QM 6759 / NRRL 1006) (Penicillium stipitatum), this protein is Esterase tropF.